The sequence spans 194 residues: Adenylate kinase (194 aa).

10–15 serves as a coordination point for ATP; sequence GAGKGT. The interval 30–59 is NMP; sequence STGDMLRAAVAQQSEIGKRAKAVMDAGQLV. Residues threonine 31, arginine 36, 57–59, 85–88, and glutamine 92 each bind AMP; these read QLV and GYPR. Residues 126 to 142 are LID; it reads SRVAETIAKGGQVRSDD. Arginine 127 provides a ligand contact to ATP. Arginine 139 and arginine 150 together coordinate AMP. An ATP-binding site is contributed by alanine 178.

Belongs to the adenylate kinase family. Monomer.

Its subcellular location is the cytoplasm. It carries out the reaction AMP + ATP = 2 ADP. It functions in the pathway purine metabolism; AMP biosynthesis via salvage pathway; AMP from ADP: step 1/1. Functionally, catalyzes the reversible transfer of the terminal phosphate group between ATP and AMP. Plays an important role in cellular energy homeostasis and in adenine nucleotide metabolism. The protein is Adenylate kinase of Brucella abortus (strain S19).